We begin with the raw amino-acid sequence, 259 residues long: Putative zinc metalloprotease Rip2 (259 aa).

2 helical membrane-spanning segments follow: residues 14–34 (PIFLGLLGLTAVGGALAWLAG) and 39–59 (PLAYAGVFVMVIAGWLVSLCL). Zn(2+) is bound at residue histidine 60. Glutamate 61 is an active-site residue. Histidine 64 provides a ligand contact to Zn(2+). Helical transmembrane passes span 97–117 (GLPMLFIALGGIGLPGAAVYV), 128–148 (TLVSLAGPTVNLALAMLLLAA), 156–176 (IHAVLWAGVAFLAFLQLTALV), and 211–231 (LVFLLVLFLAPTLNGWFFGVV).

Belongs to the peptidase M50B family. It depends on Zn(2+) as a cofactor.

The protein resides in the cell membrane. This is Putative zinc metalloprotease Rip2 (rip2) from Mycobacterium tuberculosis (strain ATCC 25618 / H37Rv).